A 491-amino-acid polypeptide reads, in one-letter code: Peptidoglycan D,D-transpeptidase PbpA (491 aa).

The Cytoplasmic segment spans residues Met1–Arg7. A helical; Signal-anchor for type II membrane protein transmembrane segment spans residues Ile8 to Val28. Residues Phe29–Pro491 are Periplasmic-facing. The tract at residues Gly160–Glu484 is transpeptidase. Ser222 acts as the Acyl-ester intermediate in catalysis.

The protein belongs to the transpeptidase family.

The protein localises to the cell inner membrane. The catalysed reaction is Preferential cleavage: (Ac)2-L-Lys-D-Ala-|-D-Ala. Also transpeptidation of peptidyl-alanyl moieties that are N-acyl substituents of D-alanine.. The protein operates within cell wall biogenesis; peptidoglycan biosynthesis. Transpeptidase that catalyzes cross-linking of the peptidoglycan cell wall. Required for the regulation of cell length. The protein is Peptidoglycan D,D-transpeptidase PbpA (pbpA) of Mycobacterium tuberculosis (strain CDC 1551 / Oshkosh).